Reading from the N-terminus, the 387-residue chain is TPR repeat-containing protein SYNPCC7002_A0425 (387 aa).

9 TPR repeats span residues 63 to 96 (LNAL…EANN), 97 to 130 (ARIH…EDDN), 132 to 164 (EFFN…QPNN), 166 to 198 (AYSL…DSNN), 200 to 232 (MALQ…RPND), 233 to 266 (AELR…STRD), 267 to 300 (SAMQ…DPQS), 302 to 334 (EAFA…SPTD), and 336 to 368 (AAFY…YQQR).

In Picosynechococcus sp. (strain ATCC 27264 / PCC 7002 / PR-6) (Agmenellum quadruplicatum), this protein is TPR repeat-containing protein SYNPCC7002_A0425.